A 643-amino-acid chain; its full sequence is Threonine--tRNA ligase (643 aa).

A TGS domain is found at 1 to 61 (MPIITLPDGS…SEDATLEIIT (61 aa)). Positions 243–534 (DHRKIGKALD…ITEEYAGFFP (292 aa)) are catalytic. Positions 334, 385, and 511 each coordinate Zn(2+).

Belongs to the class-II aminoacyl-tRNA synthetase family. As to quaternary structure, homodimer. Requires Zn(2+) as cofactor.

Its subcellular location is the cytoplasm. It catalyses the reaction tRNA(Thr) + L-threonine + ATP = L-threonyl-tRNA(Thr) + AMP + diphosphate + H(+). In terms of biological role, catalyzes the attachment of threonine to tRNA(Thr) in a two-step reaction: L-threonine is first activated by ATP to form Thr-AMP and then transferred to the acceptor end of tRNA(Thr). Also edits incorrectly charged L-seryl-tRNA(Thr). The chain is Threonine--tRNA ligase from Glaesserella parasuis serovar 5 (strain SH0165) (Haemophilus parasuis).